A 489-amino-acid polypeptide reads, in one-letter code: Transcription factor TGAL11 (489 aa).

The span at 87–99 shows a compositional bias: low complexity; it reads AATATATARPPAT. Residues 87 to 181 are disordered; it reads AATATATARP…SDHRMTKTLD (95 aa). The segment covering 121 to 139 has biased composition (polar residues); it reads SNVTADTTDSESSSKNNGD. The segment covering 148-159 has biased composition (low complexity); that stretch reads ASQFDQIPQQQQ. Residues 171-181 are compositionally biased toward basic and acidic residues; it reads HSDHRMTKTLD. Positions 181-225 constitute a bZIP domain; the sequence is DPKIMRRLAQNREAARKSRLRKKAYIQQLESSKLRLAQMEQDLER. Positions 183–203 are basic motif; sequence KIMRRLAQNREAARKSRLRKK. The tract at residues 209–223 is leucine-zipper; that stretch reads LESSKLRLAQMEQDL. Positions 245-460 constitute a DOG1 domain; that stretch reads AAMFDAEYGR…RALSSLWASR (216 aa).

Belongs to the bZIP family.

The protein resides in the nucleus. Its function is as follows. Transcriptional regulator involved in defense response. The protein is Transcription factor TGAL11 of Oryza sativa subsp. japonica (Rice).